The primary structure comprises 1863 residues: E3 ubiquitin-protein ligase ubr3 (1863 aa).

A UBR-type zinc finger spans residues 80-151 (TLCGLVWTAN…ESGFCNRHRL (72 aa)). Disordered stretches follow at residues 302–330 (LDDS…SSTK), 970–995 (PEVE…SATF), and 1128–1152 (IPPK…RARE). Composition is skewed to basic and acidic residues over residues 971-984 (EVER…ERET) and 1134-1152 (SPGD…RARE). The RING-type; degenerate zinc-finger motif lies at 1270-1328 (DSSCLQSVSIGWDGGVYVQTCGHTLHIDCHKSYMESLRNDQVLQGISVDKGEFTCPLCR).

The protein belongs to the E3 ubiquitin-protein ligase UBR1-like family.

It carries out the reaction S-ubiquitinyl-[E2 ubiquitin-conjugating enzyme]-L-cysteine + [acceptor protein]-L-lysine = [E2 ubiquitin-conjugating enzyme]-L-cysteine + N(6)-ubiquitinyl-[acceptor protein]-L-lysine.. Its pathway is protein modification; protein ubiquitination. Its function is as follows. E3 ubiquitin-protein ligase which is a component of the N-end rule pathway. Recognizes and binds to proteins bearing specific N-terminal residues, leading to their ubiquitination and subsequent degradation. Positively regulates hedgehog/shh-signaling pathways that function in eye development, neuronal specification and somite development. Activation of shh up-regulates transcription of ubr3, which in turn promotes hedgehog/shh signaling possibly by controlling negative regulators such as Kif7. The chain is E3 ubiquitin-protein ligase ubr3 from Danio rerio (Zebrafish).